Reading from the N-terminus, the 97-residue chain is Aspartyl/glutamyl-tRNA(Asn/Gln) amidotransferase subunit C (97 aa).

Belongs to the GatC family. Heterotrimer of A, B and C subunits.

The catalysed reaction is L-glutamyl-tRNA(Gln) + L-glutamine + ATP + H2O = L-glutaminyl-tRNA(Gln) + L-glutamate + ADP + phosphate + H(+). It catalyses the reaction L-aspartyl-tRNA(Asn) + L-glutamine + ATP + H2O = L-asparaginyl-tRNA(Asn) + L-glutamate + ADP + phosphate + 2 H(+). Functionally, allows the formation of correctly charged Asn-tRNA(Asn) or Gln-tRNA(Gln) through the transamidation of misacylated Asp-tRNA(Asn) or Glu-tRNA(Gln) in organisms which lack either or both of asparaginyl-tRNA or glutaminyl-tRNA synthetases. The reaction takes place in the presence of glutamine and ATP through an activated phospho-Asp-tRNA(Asn) or phospho-Glu-tRNA(Gln). This is Aspartyl/glutamyl-tRNA(Asn/Gln) amidotransferase subunit C from Listeria welshimeri serovar 6b (strain ATCC 35897 / DSM 20650 / CCUG 15529 / CIP 8149 / NCTC 11857 / SLCC 5334 / V8).